We begin with the raw amino-acid sequence, 345 residues long: S-adenosylmethionine:tRNA ribosyltransferase-isomerase (345 aa).

The protein belongs to the QueA family. Monomer.

The protein resides in the cytoplasm. The catalysed reaction is 7-aminomethyl-7-carbaguanosine(34) in tRNA + S-adenosyl-L-methionine = epoxyqueuosine(34) in tRNA + adenine + L-methionine + 2 H(+). It functions in the pathway tRNA modification; tRNA-queuosine biosynthesis. Functionally, transfers and isomerizes the ribose moiety from AdoMet to the 7-aminomethyl group of 7-deazaguanine (preQ1-tRNA) to give epoxyqueuosine (oQ-tRNA). The polypeptide is S-adenosylmethionine:tRNA ribosyltransferase-isomerase (Shewanella sp. (strain W3-18-1)).